A 678-amino-acid polypeptide reads, in one-letter code: UvrABC system protein C (678 aa).

The GIY-YIG domain occupies 16-95; sequence VEPGVYRFRD…IKEFDPRFNI (80 aa). One can recognise a UVR domain in the interval 208 to 243; it reads DRLIREMEQQMNAAAEELDFERAARLRDNIGAMRRA. The disordered stretch occupies residues 477–508; the sequence is HLRDAEAAPEGRPEQGPRASARPEQGPRASAR. Positions 479-491 are enriched in basic and acidic residues; sequence RDAEAAPEGRPEQ.

This sequence belongs to the UvrC family. Interacts with UvrB in an incision complex.

It is found in the cytoplasm. Functionally, the UvrABC repair system catalyzes the recognition and processing of DNA lesions. UvrC both incises the 5' and 3' sides of the lesion. The N-terminal half is responsible for the 3' incision and the C-terminal half is responsible for the 5' incision. This Mycolicibacterium vanbaalenii (strain DSM 7251 / JCM 13017 / BCRC 16820 / KCTC 9966 / NRRL B-24157 / PYR-1) (Mycobacterium vanbaalenii) protein is UvrABC system protein C.